Consider the following 96-residue polypeptide: Small ribosomal subunit protein bS6 (96 aa).

It belongs to the bacterial ribosomal protein bS6 family.

Binds together with bS18 to 16S ribosomal RNA. The polypeptide is Small ribosomal subunit protein bS6 (Beutenbergia cavernae (strain ATCC BAA-8 / DSM 12333 / CCUG 43141 / JCM 11478 / NBRC 16432 / NCIMB 13614 / HKI 0122)).